Here is a 124-residue protein sequence, read N- to C-terminus: Protein Rev (124 aa).

Serine 5 is modified (phosphoserine; by host CK2). Residues 19–27 (IIKILYQSN) are homomultimerization. The disordered stretch occupies residues 25–51 (QSNPYPSPEGTRKARRNRRRRWRARQK). Residues 35–51 (TRKARRNRRRRWRARQK) carry the Nuclear localization signal and RNA-binding (RRE) motif. Residues 37–50 (KARRNRRRRWRARQ) are compositionally biased toward basic residues. The Nuclear export signal and binding to XPO1 signature appears at 74–85 (LELPELDKLSLQ). Over residues 90–106 (TQDVGTSNTSQPQTATG) the composition is skewed to polar residues. Positions 90-124 (TQDVGTSNTSQPQTATGETVPAGGNYSILGKGAKN) are disordered.

The protein belongs to the HIV-1 REV protein family. As to quaternary structure, homomultimer; when bound to the RRE. Multimeric assembly is essential for activity and may involve XPO1. Binds to human KPNB1, XPO1, TNPO1, RANBP5 and IPO7. Interacts with the viral Integrase. Interacts with human KHDRBS1. Interacts with human NAP1; this interaction decreases Rev multimerization and stimulates its activity. Interacts with human DEAD-box helicases DDX3 and DDX24; these interactions may serve for viral RNA export to the cytoplasm and packaging, respectively. Interacts with human PSIP1; this interaction may inhibit HIV-1 DNA integration by promoting dissociation of the Integrase-LEDGF/p75 complex. Asymmetrically arginine dimethylated at one site by host PRMT6. Methylation impairs the RNA-binding activity and export of viral RNA from the nucleus to the cytoplasm. Post-translationally, phosphorylated by protein kinase CK2. Presence of, and maybe binding to the N-terminus of the regulatory beta subunit of CK2 is necessary for CK2-mediated Rev's phosphorylation.

The protein resides in the host nucleus. It localises to the host nucleolus. The protein localises to the host cytoplasm. In terms of biological role, escorts unspliced or incompletely spliced viral pre-mRNAs (late transcripts) out of the nucleus of infected cells. These pre-mRNAs carry a recognition sequence called Rev responsive element (RRE) located in the env gene, that is not present in fully spliced viral mRNAs (early transcripts). This function is essential since most viral proteins are translated from unspliced or partially spliced pre-mRNAs which cannot exit the nucleus by the pathway used by fully processed cellular mRNAs. Rev itself is translated from a fully spliced mRNA that readily exits the nucleus. Rev's nuclear localization signal (NLS) binds directly to KPNB1/Importin beta-1 without previous binding to KPNA1/Importin alpha-1. KPNB1 binds to the GDP bound form of RAN (Ran-GDP) and targets Rev to the nucleus. In the nucleus, the conversion from Ran-GDP to Ran-GTP dissociates Rev from KPNB1 and allows Rev's binding to the RRE in viral pre-mRNAs. Rev multimerization on the RRE via cooperative assembly exposes its nuclear export signal (NES) to the surface. Rev can then form a complex with XPO1/CRM1 and Ran-GTP, leading to nuclear export of the complex. Conversion from Ran-GTP to Ran-GDP mediates dissociation of the Rev/RRE/XPO1/RAN complex, so that Rev can return to the nucleus for a subsequent round of export. Beside KPNB1, also seems to interact with TNPO1/Transportin-1, RANBP5/IPO5 and IPO7/RANBP7 for nuclear import. The nucleoporin-like HRB/RIP is an essential cofactor that probably indirectly interacts with Rev to release HIV RNAs from the perinuclear region to the cytoplasm. This Pan (chimpanzees) protein is Protein Rev.